Reading from the N-terminus, the 334-residue chain is MLNVVIVGASGYAGAELVNYMHRHRFANIKKIFVSKNSLNIDKLFSDVHQQFKNIVDLRFDTIRNCTLIKKNIDAVFLATDHRVSHSLVPFFLSSNCIVFDLSASYRMNNKKVYLDYYGFVHEYEELLKNSVYGLAEWEQEKIKKANLIALPGCYATCIQLALKPLIKENVLCDKNIPIINAISGVSGAGRKASLNNSFCEVSLQPYNIFTHRHTPEIIEKLGVPVIFIPHLGPFSRGIIATITCKLKPNVKSIDIHNIFNKFYKNKPLIRIYKKYLPSIKSVEKQPFCDIGFVIKDDYIVIVAAEDNLLKGAAAQAVQCFNVRFGFSETESII.

Cys-154 is a catalytic residue.

It belongs to the NAGSA dehydrogenase family. Type 1 subfamily.

Its subcellular location is the cytoplasm. The enzyme catalyses N-acetyl-L-glutamate 5-semialdehyde + phosphate + NADP(+) = N-acetyl-L-glutamyl 5-phosphate + NADPH + H(+). The protein operates within amino-acid biosynthesis; L-arginine biosynthesis; N(2)-acetyl-L-ornithine from L-glutamate: step 3/4. In terms of biological role, catalyzes the NADPH-dependent reduction of N-acetyl-5-glutamyl phosphate to yield N-acetyl-L-glutamate 5-semialdehyde. In Buchnera aphidicola subsp. Acyrthosiphon pisum (strain 5A), this protein is N-acetyl-gamma-glutamyl-phosphate reductase.